Reading from the N-terminus, the 428-residue chain is Adenylosuccinate synthetase (428 aa).

GTP-binding positions include 12–18 and 40–42; these read GDEGKGK and GHT. The active-site Proton acceptor is the aspartate 13. Positions 13 and 40 each coordinate Mg(2+). IMP contacts are provided by residues 13 to 16, 38 to 41, threonine 129, arginine 143, glutamine 224, threonine 239, and arginine 303; these read DEGK and NAGH. The active-site Proton donor is the histidine 41. 299 to 305 contacts substrate; sequence VTTGRSR. GTP contacts are provided by residues arginine 305, 331–333, and 413–415; these read KLD and GVG.

The protein belongs to the adenylosuccinate synthetase family. As to quaternary structure, homodimer. Mg(2+) is required as a cofactor.

The protein resides in the cytoplasm. It carries out the reaction IMP + L-aspartate + GTP = N(6)-(1,2-dicarboxyethyl)-AMP + GDP + phosphate + 2 H(+). It participates in purine metabolism; AMP biosynthesis via de novo pathway; AMP from IMP: step 1/2. In terms of biological role, plays an important role in the de novo pathway of purine nucleotide biosynthesis. Catalyzes the first committed step in the biosynthesis of AMP from IMP. This is Adenylosuccinate synthetase from Saccharopolyspora erythraea (strain ATCC 11635 / DSM 40517 / JCM 4748 / NBRC 13426 / NCIMB 8594 / NRRL 2338).